The following is a 145-amino-acid chain: D-aminoacyl-tRNA deacylase (145 aa).

The short motif at 137 to 138 (GP) is the Gly-cisPro motif, important for rejection of L-amino acids element.

Belongs to the DTD family. In terms of assembly, homodimer.

It is found in the cytoplasm. The enzyme catalyses glycyl-tRNA(Ala) + H2O = tRNA(Ala) + glycine + H(+). It catalyses the reaction a D-aminoacyl-tRNA + H2O = a tRNA + a D-alpha-amino acid + H(+). An aminoacyl-tRNA editing enzyme that deacylates mischarged D-aminoacyl-tRNAs. Also deacylates mischarged glycyl-tRNA(Ala), protecting cells against glycine mischarging by AlaRS. Acts via tRNA-based rather than protein-based catalysis; rejects L-amino acids rather than detecting D-amino acids in the active site. By recycling D-aminoacyl-tRNA to D-amino acids and free tRNA molecules, this enzyme counteracts the toxicity associated with the formation of D-aminoacyl-tRNA entities in vivo and helps enforce protein L-homochirality. This is D-aminoacyl-tRNA deacylase from Francisella tularensis subsp. holarctica (strain FTNF002-00 / FTA).